We begin with the raw amino-acid sequence, 399 residues long: Unsaturated chondroitin disaccharide hydrolase (399 aa).

Asp-116 functions as the Nucleophile in the catalytic mechanism. Substrate contacts are provided by Asp-116, Asp-176, Gly-234, Thr-236, Arg-248, Trp-252, Ser-366, and Ser-369. The active-site Proton donor is the Asp-176.

The protein belongs to the glycosyl hydrolase 88 family. As to quaternary structure, monomer.

The enzyme catalyses beta-D-4-deoxy-Delta(4)-GlcpA-(1-&gt;3)-beta-D-GalpNAc6S + H2O = N-acetyl-beta-D-galactosamine 6-sulfate + 5-dehydro-4-deoxy-D-glucuronate. Its function is as follows. Catalyzes the hydrolysis of unsaturated hyaluronate and chondroitin disaccharides. Also degrades unsaturated heparin disaccharides. Releases 4-deoxy-4,5-didehydro D-glucuronic acid or 4-deoxy-4,5-didehydro L-iduronic acid from chondroitin disaccharides, hyaluronan disaccharides and heparin disaccharides and cleaves both glycosidic (1-&gt;3) and (1-&gt;4) bonds. Prefers sulfated glycosaminoglycans compared to unsulfated glycosaminoglycans. Probably required for mammalian cells invasion through the degradation of extracellular sulfated glycosaminoglycans such as chondroitin and hyaluronan. This is Unsaturated chondroitin disaccharide hydrolase (ugl) from Streptococcus pyogenes serotype M1.